A 260-amino-acid polypeptide reads, in one-letter code: Aspartate/glutamate leucyltransferase (260 aa).

The span at 241–251 shows a compositional bias: basic and acidic residues; it reads DRLPEEGDRGP. The disordered stretch occupies residues 241–260; the sequence is DRLPEEGDRGPARFPASLTE.

This sequence belongs to the R-transferase family. Bpt subfamily.

Its subcellular location is the cytoplasm. The catalysed reaction is N-terminal L-glutamyl-[protein] + L-leucyl-tRNA(Leu) = N-terminal L-leucyl-L-glutamyl-[protein] + tRNA(Leu) + H(+). It carries out the reaction N-terminal L-aspartyl-[protein] + L-leucyl-tRNA(Leu) = N-terminal L-leucyl-L-aspartyl-[protein] + tRNA(Leu) + H(+). In terms of biological role, functions in the N-end rule pathway of protein degradation where it conjugates Leu from its aminoacyl-tRNA to the N-termini of proteins containing an N-terminal aspartate or glutamate. The chain is Aspartate/glutamate leucyltransferase from Gluconacetobacter diazotrophicus (strain ATCC 49037 / DSM 5601 / CCUG 37298 / CIP 103539 / LMG 7603 / PAl5).